Here is a 90-residue protein sequence, read N- to C-terminus: MARTVHCIKLGVDAEGLDFPPYPGELGKRIFEGVSKQAWADWLKHQTMLVNENRLNLADARARQYLARQMENHFFGGGADAAAGYVPPTA.

Belongs to the Fe(2+)-trafficking protein family.

Its function is as follows. Could be a mediator in iron transactions between iron acquisition and iron-requiring processes, such as synthesis and/or repair of Fe-S clusters in biosynthetic enzymes. This chain is Probable Fe(2+)-trafficking protein, found in Delftia acidovorans (strain DSM 14801 / SPH-1).